A 298-amino-acid polypeptide reads, in one-letter code: GTP cyclohydrolase FolE2 (298 aa).

This sequence belongs to the GTP cyclohydrolase IV family.

The catalysed reaction is GTP + H2O = 7,8-dihydroneopterin 3'-triphosphate + formate + H(+). It participates in cofactor biosynthesis; 7,8-dihydroneopterin triphosphate biosynthesis; 7,8-dihydroneopterin triphosphate from GTP: step 1/1. In terms of biological role, converts GTP to 7,8-dihydroneopterin triphosphate. The chain is GTP cyclohydrolase FolE2 from Azotobacter vinelandii (strain DJ / ATCC BAA-1303).